The primary structure comprises 539 residues: 3-hydroxy-3-methylglutaryl-coenzyme A reductase 1 (539 aa).

Residues 63–83 (FATVVCQLASVVYLLSLFAHP) form a helical membrane-spanning segment. The linker stretch occupies residues 84–124 (DAPATTTGDDDDGQGGSRRARPAAAEPAPMHGHGGGMMEAD). The disordered stretch occupies residues 87 to 116 (ATTTGDDDDGQGGSRRARPAAAEPAPMHGH). Residues 105–114 (PAAAEPAPMH) show a composition bias toward low complexity. The tract at residues 125-539 (DEEIVAAVAS…SSKDVAKAAS (415 aa)) is catalytic. Glu218 acts as the Charge relay system in catalysis. Asn282 carries N-linked (GlcNAc...) asparagine glycosylation. Catalysis depends on charge relay system residues Lys350 and Asp426. Residues 496–516 (LATIVAGSVLAGELSLLAALA) traverse the membrane as a helical segment. The active-site Proton donor is His524. The N-linked (GlcNAc...) asparagine glycan is linked to Asn528.

Belongs to the HMG-CoA reductase family.

It is found in the endoplasmic reticulum membrane. The enzyme catalyses (R)-mevalonate + 2 NADP(+) + CoA = (3S)-3-hydroxy-3-methylglutaryl-CoA + 2 NADPH + 2 H(+). It participates in metabolic intermediate biosynthesis; (R)-mevalonate biosynthesis; (R)-mevalonate from acetyl-CoA: step 3/3. In terms of biological role, catalyzes the synthesis of mevalonate. The specific precursor of all isoprenoid compounds present in plants. This is 3-hydroxy-3-methylglutaryl-coenzyme A reductase 1 (HMG1) from Oryza sativa subsp. indica (Rice).